Reading from the N-terminus, the 436-residue chain is Proline transporter 3 (436 aa).

11 helical membrane-spanning segments follow: residues 29–49, 52–72, 118–138, 151–171, 172–192, 216–236, 254–274, 296–316, 345–365, 366–386, and 405–425; these read SWFQ…VLGY, TVMV…ATAI, LFMI…AVYV, FIAI…HLSA, LGIW…VAIV, LFTI…GMLP, LYFQ…IGYW, ALAN…FASP, GGYI…GDFM, SLTG…HMYY, and VVFF…LIAL.

This sequence belongs to the amino acid/polyamine transporter 2 family. Amino acid/auxin permease (AAAP) (TC 2.A.18.3) subfamily. As to expression, expressed in epidermal cells of leaves, sepals and petals.

Its subcellular location is the cell membrane. Its function is as follows. Proline transporter that mediates proline and glycine betaine transport. When expressed in a heterologous system (yeast), imports L-proline, glycine betaine and GABA across the plasma membrane. The polypeptide is Proline transporter 3 (PROT3) (Arabidopsis thaliana (Mouse-ear cress)).